The chain runs to 221 residues: Ribosome maturation factor RimM (221 aa).

Residues 1–23 form a disordered region; it reads MTERKQGAAAPRPLNRPQGESPK. In terms of domain architecture, PRC barrel spans 144-221; the sequence is ENEFYWVDLI…RIVVDWGLDY (78 aa).

The protein belongs to the RimM family. As to quaternary structure, binds ribosomal protein uS19.

The protein localises to the cytoplasm. An accessory protein needed during the final step in the assembly of 30S ribosomal subunit, possibly for assembly of the head region. Essential for efficient processing of 16S rRNA. May be needed both before and after RbfA during the maturation of 16S rRNA. It has affinity for free ribosomal 30S subunits but not for 70S ribosomes. This is Ribosome maturation factor RimM from Cupriavidus pinatubonensis (strain JMP 134 / LMG 1197) (Cupriavidus necator (strain JMP 134)).